The sequence spans 130 residues: Large ribosomal subunit protein bL12 (130 aa).

The protein belongs to the bacterial ribosomal protein bL12 family. As to quaternary structure, homodimer. Part of the ribosomal stalk of the 50S ribosomal subunit. Forms a multimeric L10(L12)X complex, where L10 forms an elongated spine to which 2 to 4 L12 dimers bind in a sequential fashion. Binds GTP-bound translation factors.

In terms of biological role, forms part of the ribosomal stalk which helps the ribosome interact with GTP-bound translation factors. Is thus essential for accurate translation. This chain is Large ribosomal subunit protein bL12, found in Synechococcus sp. (strain WH7803).